A 369-amino-acid chain; its full sequence is 2-aminoethylphosphonate--pyruvate transaminase (369 aa).

An N6-(pyridoxal phosphate)lysine modification is found at lysine 193.

Belongs to the class-V pyridoxal-phosphate-dependent aminotransferase family. PhnW subfamily. In terms of assembly, homodimer. Pyridoxal 5'-phosphate is required as a cofactor.

It catalyses the reaction (2-aminoethyl)phosphonate + pyruvate = phosphonoacetaldehyde + L-alanine. Involved in phosphonate degradation. The polypeptide is 2-aminoethylphosphonate--pyruvate transaminase (Pseudomonas fluorescens (strain Pf0-1)).